A 414-amino-acid chain; its full sequence is 2,3-diketo-5-methylthiopentyl-1-phosphate enolase (414 aa).

The active-site Proton acceptor is the K99. Substrate is bound by residues K148, 174–177 (KDDE), H265, G338, and 360–361 (GG). K174, D176, and E177 together coordinate Mg(2+). Position 174 is an N6-carboxylysine (K174).

This sequence belongs to the RuBisCO large chain family. Type IV subfamily. In terms of assembly, homodimer. Mg(2+) is required as a cofactor.

The enzyme catalyses 5-methylsulfanyl-2,3-dioxopentyl phosphate = 2-hydroxy-5-methylsulfanyl-3-oxopent-1-enyl phosphate. It functions in the pathway amino-acid biosynthesis; L-methionine biosynthesis via salvage pathway; L-methionine from S-methyl-5-thio-alpha-D-ribose 1-phosphate: step 3/6. Catalyzes the enolization of 2,3-diketo-5-methylthiopentyl-1-phosphate (DK-MTP-1-P) into 2-hydroxy-3-keto-5-methylthiopentenyl-1-phosphate (HK-MTPenyl-1-P). The protein is 2,3-diketo-5-methylthiopentyl-1-phosphate enolase of Bacillus cereus (strain ZK / E33L).